The chain runs to 203 residues: ADP-ribosylation factor-like protein 6-interacting protein 1 (203 aa).

Over 1 to 41 (MAEGDNRSTNLLAAETASLEEQLQGWGEVMLMADKVLRWER) the chain is Cytoplasmic. The chain crosses the membrane as a helical span at residues 42 to 62 (AWFPPAIMGVVSLVFLIIYYL). Residues 63-65 (DPS) lie on the Lumenal side of the membrane. The helical transmembrane segment at 66–86 (VLSGVSCFVMFLCLADYLVPI) threads the bilayer. The Cytoplasmic segment spans residues 87-133 (LAPRIFGSNKWTTEQQQRFHEICSNLVKTRRRAVGWWKRLFTLKEEK). The chain crosses the membrane as a helical span at residues 134-175 (PKMYFMTMIVSLAAVAWVGQQVHNLLLTYLIVTSLLLLPGLN). The Lumenal segment spans residues 176–203 (QHGIILKYIGMAKREINKLLKQKEKKNE).

This sequence belongs to the ARL6ip family. Homooligomer. Heterodimer with ARL6IP5. Interacts with ARL6. Interacts with TMEM33. Interacts with ATL1. In terms of tissue distribution, expressed in all hematopoietic cell lineages, but the highest level of expression is found in early myeloid progenitor cells. Expressed in brain, bone marrow, thymus and lung. Expressed at low level in liver, kidney and spleen. Not detected in heart.

Its subcellular location is the endomembrane system. The protein resides in the endoplasmic reticulum membrane. It localises to the endoplasmic reticulum. Its function is as follows. Positively regulates SLC1A1/EAAC1-mediated glutamate transport by increasing its affinity for glutamate in a PKC activity-dependent manner. Promotes the catalytic efficiency of SLC1A1/EAAC1 probably by reducing its interaction with ARL6IP5, a negative regulator of SLC1A1/EAAC1-mediated glutamate transport. Plays a role in the formation and stabilization of endoplasmic reticulum tubules. Negatively regulates apoptosis, possibly by modulating the activity of caspase-9 (CASP9). Inhibits cleavage of CASP9-dependent substrates and downstream markers of apoptosis but not CASP9 itself. May be involved in protein transport, membrane trafficking, or cell signaling during hematopoietic maturation. The polypeptide is ADP-ribosylation factor-like protein 6-interacting protein 1 (ARL6IP1) (Homo sapiens (Human)).